The sequence spans 475 residues: Doublecortin domain-containing protein 2 (475 aa).

Doublecortin domains lie at lysine 17–leucine 100 and cysteine 139–serine 221. The interval tyrosine 234–alanine 475 is disordered. A compositionally biased stretch (polar residues) spans glycine 252–glutamine 272. Serine 270 bears the Phosphoserine mark. The span at glutamate 353–phenylalanine 365 shows a compositional bias: basic and acidic residues. The segment covering threonine 407–threonine 419 has biased composition (acidic residues). Residues threonine 455–alanine 475 are compositionally biased toward polar residues.

Interacts with DVL1, DVL2 and DVL3. Expressed in hair cells of the inner ear.

It localises to the cell projection. The protein localises to the cilium. It is found in the cytoplasm. The protein resides in the cytoskeleton. Its subcellular location is the cilium axoneme. It localises to the kinocilium. In terms of biological role, protein that plays a role in the inhibition of canonical Wnt signaling pathway. May be involved in neuronal migration during development of the cerebral neocortex. Involved in the control of ciliogenesis and ciliary length. The sequence is that of Doublecortin domain-containing protein 2 (Dcdc2) from Rattus norvegicus (Rat).